The chain runs to 245 residues: 5-oxoprolinase subunit A (245 aa).

It belongs to the LamB/PxpA family. Forms a complex composed of PxpA, PxpB and PxpC.

It catalyses the reaction 5-oxo-L-proline + ATP + 2 H2O = L-glutamate + ADP + phosphate + H(+). Its function is as follows. Catalyzes the cleavage of 5-oxoproline to form L-glutamate coupled to the hydrolysis of ATP to ADP and inorganic phosphate. The polypeptide is 5-oxoprolinase subunit A (Neisseria meningitidis serogroup A / serotype 4A (strain DSM 15465 / Z2491)).